A 499-amino-acid polypeptide reads, in one-letter code: MARQEQTMNDQLKVRREKMDELREEGIDPFGHRFERTDLAQDLQDKYGDMDKDELDAKQVVATIAGRMLAKRGKGKVGFADIWDRSGKMQLYIRKDVVGEDTYHIFKRSDIGDFLGITGQVFKTDFGELTIKVTGLTFLSKALRPLPDKFHGLQNVEQIYRQRYLDLISNRDSFDRFLKRTKIISAIRHHLDDQGFTEVETPMLHNQAGGAAARPFVTHHNALNIDLYLRIALELHLKRLIVGGMEKVYEIGRVFRNEGMDREHNPEFTMMETYVAYFDFHDVMAETEGIFKAAAQAVTDDGIVTYHDQKVDFNQPFKQIHMVDAIKEKTGIDFWQPMSIEDAQKLADEHHVKYEPYWKVGHIINAFFEEFVEDTLNEPTFVYGHPVEISPLAKKNEEDPRFTDRFELFILGNEYANAFSELNDPIDQRQRFEAQAAERTAGNDEAEHIDEDFVEALEYGMPPTGGLGIGIDRLVMLMTDADSIRDVLLFPTMRPEEDK.

Mg(2+) is bound by residues glutamate 407 and glutamate 414.

This sequence belongs to the class-II aminoacyl-tRNA synthetase family. In terms of assembly, homodimer. Mg(2+) serves as cofactor.

It is found in the cytoplasm. The enzyme catalyses tRNA(Lys) + L-lysine + ATP = L-lysyl-tRNA(Lys) + AMP + diphosphate. In Lactiplantibacillus plantarum (strain ATCC BAA-793 / NCIMB 8826 / WCFS1) (Lactobacillus plantarum), this protein is Lysine--tRNA ligase.